The primary structure comprises 81 residues: Sulfur carrier protein TusA (81 aa).

Cysteine 19 serves as the catalytic Cysteine persulfide intermediate.

This sequence belongs to the sulfur carrier protein TusA family. Interacts with IscS.

The protein resides in the cytoplasm. Its pathway is tRNA modification. Functionally, sulfur carrier protein involved in sulfur trafficking in the cell. Part of a sulfur-relay system required for 2-thiolation during synthesis of 2-thiouridine of the modified wobble base 5-methylaminomethyl-2-thiouridine (mnm(5)s(2)U) in tRNA. Interacts with IscS and stimulates its cysteine desulfurase activity. Accepts an activated sulfur from IscS, which is then transferred to TusD, and thus determines the direction of sulfur flow from IscS to 2-thiouridine formation. Also appears to be involved in sulfur transfer for the biosynthesis of molybdopterin. In Pectobacterium atrosepticum (strain SCRI 1043 / ATCC BAA-672) (Erwinia carotovora subsp. atroseptica), this protein is Sulfur carrier protein TusA.